A 366-amino-acid polypeptide reads, in one-letter code: MKFLVLLVALLLWPSSLPAYRRVTVTPDEEQNLNHYVQVLQNLILSVPTKEPGRQKKSKSPNNANFIGPRVSRVKELKYTHDVGPGDNDVLINPVSEETTTFPTRGFTLEIDKKKRTKSTAFWSIKPSNVSVVLHAKEPFIEKDEPEPEPEPEPEPEPVEHRTGAPTQVPSVTEPSQDVTSLSGSTDLGTATEEEDVPQLSGDNEMDYLESHDMYNEDVLKRIADINSQLHHVPLPESYKPEYRADIRASKEHLKRSLALAIAAEHKLEKMYKSQMLPQGRSSGGVYDIITVINMLYNSRYKLSEYLDIKYVPLEMRGKATVVVHTLKRILCVGHGEETHNLLKQLLNNNIRILHILDTHDKDDSS.

Positions 1–18 are cleaved as a signal peptide; sequence MKFLVLLVALLLWPSSLP. Residue N129 is glycosylated (N-linked (GlcNAc...) asparagine). Positions 139–204 are disordered; sequence PFIEKDEPEP…EDVPQLSGDN (66 aa). Residues 144–157 are compositionally biased toward acidic residues; the sequence is DEPEPEPEPEPEPE. The segment covering 165 to 189 has biased composition (polar residues); sequence APTQVPSVTEPSQDVTSLSGSTDLG.

The protein belongs to the SPESP1 family. In terms of processing, glycosylated. In testis there are two predominant forms of 77- and 67-kDa and a form of 47-kDa, whereas in epididymal sperm from caput, corpus, and cauda there are two forms of 47- and 43-kDa. Testis forms contain complex carbohydrate residues. Epididymal sperm forms are N-glycosylated. Then undergoes significant glycosylation in the testis and that the majority of these glycoconjugates are removed by the time sperm reach the caput epididymis.

The protein localises to the cytoplasmic vesicle. It localises to the secretory vesicle. The protein resides in the acrosome. Functionally, involved in fertilization ability of sperm. This Bos taurus (Bovine) protein is Sperm equatorial segment protein 1.